Reading from the N-terminus, the 319-residue chain is Free fatty acid receptor 3 (319 aa).

At 1-15 (MDTSFFPGNHWLFFS) the chain is on the extracellular side. The chain crosses the membrane as a helical span at residues 16 to 36 (VDLLVFLVGLPLNVMALVVFV). At 37 to 43 (NKLRRRP) the chain is on the cytoplasmic side. A helical membrane pass occupies residues 44 to 64 (VAVDLLLLNLTISDLLLLLFL). At 65–98 (PFRIVEAACGMKWILPFIFCPLSGFLFFTTIYLT) the chain is on the extracellular side. Cysteine 84 and cysteine 165 are disulfide-bonded. The chain crosses the membrane as a helical span at residues 99-119 (SLFLMTVSIERFLSVAYPLWY). At 120–127 (KTRPRLAQ) the chain is on the cytoplasmic side. Residues 128 to 148 (AGLVSGICWFLASAHCSVIYV) traverse the membrane as a helical segment. Over 149-183 (TEYWGNATYSQGTNGTCYLEFREDQLAILLPVRLE) the chain is Extracellular. Residues 184–206 (MAVVLFMVPLCITSYCYSRLVWI) form a helical membrane-spanning segment. The Cytoplasmic portion of the chain corresponds to 207–218 (LSQGASRRRRKR). Residues 219–239 (VMGLLVATLLIFFVCFGPYNM) traverse the membrane as a helical segment. Topologically, residues 240 to 254 (SHVVGYVRGESPTWR) are extracellular. Residues 255–275 (SYVLLLSTLNSCIDPLVFYFS) traverse the membrane as a helical segment. Topologically, residues 276–319 (SSKFQADFHQLLSRLIRACVPWTQEVSLELKVKNGEEPSKECPS) are cytoplasmic.

This sequence belongs to the G-protein coupled receptor 1 family. In terms of tissue distribution, expressed in the sympathetic nervous system.

The protein localises to the cell membrane. Functionally, g protein-coupled receptor that is activated by a major product of dietary fiber digestion, the short chain fatty acids (SCFAs), and that plays a role in the regulation of whole-body energy homeostasis and in intestinal immunity. In omnivorous mammals, the short chain fatty acids acetate, propionate and butyrate are produced primarily by the gut microbiome that metabolizes dietary fibers. SCFAs serve as a source of energy but also act as signaling molecules. That G protein-coupled receptor is probably coupled to the pertussis toxin-sensitive, G(i/o)-alpha family of G proteins. Its activation results in the formation of inositol 1,4,5-trisphosphate, the mobilization of intracellular calcium, the phosphorylation of the MAPK3/ERK1 and MAPK1/ERK2 kinases and the inhibition of intracellular cAMP accumulation. Activated by SCFAs and by beta-hydroxybutyrate, a ketone body produced by the liver upon starvation, it inhibits N-type calcium channels and modulates the activity of sympathetic neurons through a signaling cascade involving the beta and gamma subunits of its coupled G protein, phospholipase C and MAP kinases. Thereby, it may regulate energy expenditure through the control of the sympathetic nervous system that controls for instance heart rate. Upon activation by SCFAs accumulating in the intestine, it may also signal to the brain via neural circuits which in turn would regulate intestinal gluconeogenesis. May also control the production of hormones involved in whole-body energy homeostasis. May for instance, regulate blood pressure through renin secretion. May also regulate secretion of the PYY peptide by enteroendocrine cells and control gut motility, intestinal transit rate, and the harvesting of energy from SCFAs produced by gut microbiota. May also indirectly regulate the production of LEP/Leptin, a hormone acting on the CNS to inhibit food intake, in response to the presence of short-chain fatty acids in the intestine. Finally, may also play a role in glucose homeostasis. Besides its role in energy homeostasis, may play a role in intestinal immunity. May mediate the activation of the inflammatory and immune response by SCFAs in the gut, regulating the rapid production of chemokines and cytokines by intestinal epithelial cells. The sequence is that of Free fatty acid receptor 3 (Ffar3) from Rattus norvegicus (Rat).